A 103-amino-acid chain; its full sequence is Small ribosomal subunit protein uS10 (103 aa).

This sequence belongs to the universal ribosomal protein uS10 family. As to quaternary structure, part of the 30S ribosomal subunit.

Involved in the binding of tRNA to the ribosomes. The polypeptide is Small ribosomal subunit protein uS10 (Tolumonas auensis (strain DSM 9187 / NBRC 110442 / TA 4)).